The sequence spans 219 residues: Octanoyltransferase (219 aa).

Positions 32-207 (ADSGDEIWLL…HLVRQLGYAQ (176 aa)) constitute a BPL/LPL catalytic domain. Residues 71–78 (RGGQVTYH), 138–140 (SLG), and 151–153 (GLA) each bind substrate. Residue Cys169 is the Acyl-thioester intermediate of the active site.

This sequence belongs to the LipB family.

The protein resides in the cytoplasm. The enzyme catalyses octanoyl-[ACP] + L-lysyl-[protein] = N(6)-octanoyl-L-lysyl-[protein] + holo-[ACP] + H(+). It functions in the pathway protein modification; protein lipoylation via endogenous pathway; protein N(6)-(lipoyl)lysine from octanoyl-[acyl-carrier-protein]: step 1/2. Its function is as follows. Catalyzes the transfer of endogenously produced octanoic acid from octanoyl-acyl-carrier-protein onto the lipoyl domains of lipoate-dependent enzymes. Lipoyl-ACP can also act as a substrate although octanoyl-ACP is likely to be the physiological substrate. The sequence is that of Octanoyltransferase from Stutzerimonas stutzeri (strain A1501) (Pseudomonas stutzeri).